The chain runs to 406 residues: Isocitrate dehydrogenase [NADP] (406 aa).

NADP(+)-binding residues include Lys72, Thr75, Thr77, and Arg82. D-threo-isocitrate contacts are provided by Ser94, Asn96, Arg100, Glu110, and Arg132. Residues Asp250, Asp273, and Asp277 each coordinate Mn(2+). The NADP(+) site is built by Gly308, Thr309, Val310, His313, and Asn326.

This sequence belongs to the isocitrate and isopropylmalate dehydrogenases family. Homodimer. Requires Mg(2+) as cofactor. Mn(2+) is required as a cofactor.

It catalyses the reaction D-threo-isocitrate + NADP(+) = 2-oxoglutarate + CO2 + NADPH. Functionally, catalyzes the oxidative decarboxylation of isocitrate to 2-oxoglutarate and carbon dioxide with the concomitant reduction of NADP(+). In Sphingobium yanoikuyae (Sphingomonas yanoikuyae), this protein is Isocitrate dehydrogenase [NADP] (icd).